The following is a 481-amino-acid chain: ATP synthase subunit beta (481 aa).

167-174 (GGAGVGKT) contributes to the ATP binding site.

Belongs to the ATPase alpha/beta chains family. In terms of assembly, F-type ATPases have 2 components, CF(1) - the catalytic core - and CF(0) - the membrane proton channel. CF(1) has five subunits: alpha(3), beta(3), gamma(1), delta(1), epsilon(1). CF(0) has three main subunits: a(1), b(2) and c(9-12). The alpha and beta chains form an alternating ring which encloses part of the gamma chain. CF(1) is attached to CF(0) by a central stalk formed by the gamma and epsilon chains, while a peripheral stalk is formed by the delta and b chains.

It is found in the cell membrane. It carries out the reaction ATP + H2O + 4 H(+)(in) = ADP + phosphate + 5 H(+)(out). Produces ATP from ADP in the presence of a proton gradient across the membrane. The catalytic sites are hosted primarily by the beta subunits. The sequence is that of ATP synthase subunit beta from Corynebacterium diphtheriae (strain ATCC 700971 / NCTC 13129 / Biotype gravis).